Consider the following 315-residue polypeptide: Ribosomal RNA small subunit methyltransferase H (315 aa).

S-adenosyl-L-methionine contacts are provided by residues 37-39 (GGH), Asp-57, Phe-83, Asp-105, and Gln-112.

Belongs to the methyltransferase superfamily. RsmH family.

Its subcellular location is the cytoplasm. It carries out the reaction cytidine(1402) in 16S rRNA + S-adenosyl-L-methionine = N(4)-methylcytidine(1402) in 16S rRNA + S-adenosyl-L-homocysteine + H(+). Functionally, specifically methylates the N4 position of cytidine in position 1402 (C1402) of 16S rRNA. The polypeptide is Ribosomal RNA small subunit methyltransferase H (Pseudomonas fluorescens (strain ATCC BAA-477 / NRRL B-23932 / Pf-5)).